Here is a 202-residue protein sequence, read N- to C-terminus: Orotate phosphoribosyltransferase (202 aa).

Residues arginine 94, lysine 98, histidine 100, and 120–128 (EDLISTGGS) each bind 5-phospho-alpha-D-ribose 1-diphosphate. Serine 124 lines the orotate pocket.

It belongs to the purine/pyrimidine phosphoribosyltransferase family. PyrE subfamily. Homodimer. The cofactor is Mg(2+).

It catalyses the reaction orotidine 5'-phosphate + diphosphate = orotate + 5-phospho-alpha-D-ribose 1-diphosphate. It functions in the pathway pyrimidine metabolism; UMP biosynthesis via de novo pathway; UMP from orotate: step 1/2. In terms of biological role, catalyzes the transfer of a ribosyl phosphate group from 5-phosphoribose 1-diphosphate to orotate, leading to the formation of orotidine monophosphate (OMP). The polypeptide is Orotate phosphoribosyltransferase (Staphylococcus haemolyticus (strain JCSC1435)).